The following is a 139-amino-acid chain: Actin-depolymerizing factor 1 (139 aa).

The 135-residue stretch at 5-139 (ASGMAVHDDC…DLDVFRSRAN (135 aa)) folds into the ADF-H domain. S6 is subject to Phosphoserine; by CPK3.

Belongs to the actin-binding proteins ADF family. Interacts with the 14-3-3-like protein GRF6/AFT1. Post-translationally, phosphorylation at Ser-6 by CPK3/CDPK6 inhibits actin-depolimerizing activity. In terms of tissue distribution, expressed in vascular tissues of all organs.

It is found in the cytoplasm. The protein resides in the cytoskeleton. Its function is as follows. Actin-depolymerizing protein. Stimulates F-actin depolymerization. Involved in plant development, cell organ expansion and flowering by controlling breakdown of thick actin cables. Severs actin filaments or bundles and promotes actin cytoskeleton disassembly. Binds monomeric actin (G-actin) with a marked preference for the ADP-loaded form and inhibits the rate of nucleotide exchange on G-actin. This Arabidopsis thaliana (Mouse-ear cress) protein is Actin-depolymerizing factor 1 (ADF1).